A 185-amino-acid polypeptide reads, in one-letter code: Potassium-transporting ATPase KdpC subunit (185 aa).

Residues 14–34 form a helical membrane-spanning segment; sequence ALSLLTGVAYPLALTGIAAVI.

It belongs to the KdpC family. The system is composed of three essential subunits: KdpA, KdpB and KdpC.

It is found in the cell inner membrane. Functionally, part of the high-affinity ATP-driven potassium transport (or Kdp) system, which catalyzes the hydrolysis of ATP coupled with the electrogenic transport of potassium into the cytoplasm. This subunit acts as a catalytic chaperone that increases the ATP-binding affinity of the ATP-hydrolyzing subunit KdpB by the formation of a transient KdpB/KdpC/ATP ternary complex. The chain is Potassium-transporting ATPase KdpC subunit from Cereibacter sphaeroides (strain KD131 / KCTC 12085) (Rhodobacter sphaeroides).